We begin with the raw amino-acid sequence, 338 residues long: 2-methyl-6-phytyl-1,4-hydroquinone methyltransferase, chloroplastic (338 aa).

The N-terminal 51 residues, 1–51, are a transit peptide targeting the chloroplast; it reads MASLMLNGAITFPKGLGSPGSNLHARSIPRPTLLSVTRTSTPRLSVATRCS. At 52–307 the chain is on the chloroplast intermembrane side; sequence SSSVSSSRPS…VNNPFSFLGR (256 aa). Residues 114–123 are SAM motif I; sequence VVDVGGGTGF. Residues 159 to 172 are SAM motif II; it reads CKIVEGDAEDLPFP. Residues 200 to 213 are SAM motif III; that stretch reads RVLKIGGKACLIGP. Residues 308-328 traverse the membrane as a helical segment; that stretch reads FLLGTLAAAWFVLIPIYMWIK. Over 329 to 338 the chain is Stromal; that stretch reads DQIVPKDQPI.

The protein belongs to the class I-like SAM-binding methyltransferase superfamily. MPBQ/MBSQ MT family.

The protein resides in the plastid. It is found in the chloroplast inner membrane. The catalysed reaction is 2-methyl-6-phytyl-1,4-benzene-1,4-diol + S-adenosyl-L-methionine = 2,3-dimethyl-6-phytylbenzene-1,4-diol + S-adenosyl-L-homocysteine + H(+). The enzyme catalyses 2-methyl-6-(all-trans-nonaprenyl)benzene-1,4-diol + S-adenosyl-L-methionine = plastoquinol-9 + S-adenosyl-L-homocysteine + H(+). It carries out the reaction 6-geranylgeranyl-2-methylbenzene-1,4-diol + S-adenosyl-L-methionine = 6-geranylgeranyl-2,3-dimethylbenzene-1,4-diol + S-adenosyl-L-homocysteine + H(+). Its pathway is cofactor biosynthesis; tocopherol biosynthesis. Involved in a key methylation step in both tocopherols (vitamin E) and plastoquinone synthesis. Catalyzes the conversion of 2-methyl-6-phytyl-1,4-hydroquinone (MPBQ) to 2,3-dimethyl-6-phytyl-1,4-hydroquinone (DMPQ, a substrate for tocopherol cyclase), and 2-methyl-6-solanyl-1,4-benzoquinone (MSBQ) to plastoquinone. This chain is 2-methyl-6-phytyl-1,4-hydroquinone methyltransferase, chloroplastic (VTE3), found in Arabidopsis thaliana (Mouse-ear cress).